The chain runs to 333 residues: Putative transporter MamV (333 aa).

Helical transmembrane passes span 19–39, 86–106, 111–131, 170–190, and 191–211; these read AWLD…LGVL, FLSA…MLWY, LGSG…LISA, VLAG…LAAI, and LVSL…IHGL.

It belongs to the cation diffusion facilitator (CDF) transporter (TC 2.A.4) family.

It localises to the cell inner membrane. Expression of just the minimal mamAB gene cluster (amb0961 to amb0978), including this gene, is sufficient to form a minimal magnetosome chain with small magnetite particles. This is Putative transporter MamV from Paramagnetospirillum magneticum (strain ATCC 700264 / AMB-1) (Magnetospirillum magneticum).